A 334-amino-acid chain; its full sequence is Beta-1,3-N-acetylglucosaminyltransferase radical fringe (334 aa).

Residues 1-6 (MSRVRR) lie on the Cytoplasmic side of the membrane. The helical; Signal-anchor for type II membrane protein transmembrane segment at 7–29 (VLCRACLALAAVLAVLLLLPLPL) threads the bilayer. Over 30–334 (PLPLPLPRAP…MKNRGKEAFQ (305 aa)) the chain is Lumenal. Arginine 77 serves as a coordination point for substrate. The N-linked (GlcNAc...) asparagine glycan is linked to asparagine 116. Disulfide bonds link cysteine 117–cysteine 128 and cysteine 146–cysteine 210. Aspartate 150 is a binding site for substrate. Mn(2+) is bound at residue aspartate 151. The active site involves aspartate 240. Histidine 264 contributes to the Mn(2+) binding site. A disulfide bridge connects residues cysteine 314 and cysteine 323.

Belongs to the glycosyltransferase 31 family. Requires Mn(2+) as cofactor. Most abundantly expressed in adult brain. Expressed in most neurons of the brain but not in glial cells. Also detected to a lower extent in adult lung and kidney.

Its subcellular location is the golgi apparatus membrane. It catalyses the reaction 3-O-(alpha-L-fucosyl)-L-threonyl-[EGF-like domain protein] + UDP-N-acetyl-alpha-D-glucosamine = 3-O-(N-acetyl-beta-D-glucosaminyl-(1-&gt;3)-alpha-L-fucosyl)-L-threonyl-[EGF-like domain protein] + UDP + H(+). The catalysed reaction is 3-O-(alpha-L-fucosyl)-L-seryl-[EGF-like domain protein] + UDP-N-acetyl-alpha-D-glucosamine = 3-O-(N-acetyl-beta-D-glucosaminyl-(1-&gt;3)-alpha-L-fucosyl)-L-seryl-[EGF-like domain protein] + UDP + H(+). Glycosyltransferase that initiates the elongation of O-linked fucose residues attached to EGF-like repeats in the extracellular domain of Notch molecules. Modulates NOTCH1 activity by modifying O-fucose residues at specific EGF-like domains resulting in enhancement of NOTCH1 activation by DLL1 and JAG1. Inhibits Notch signaling in postmitotic neurons of the brain. It may play a role in adult brain and in neurogenesis. It may play a role in limb development. The sequence is that of Beta-1,3-N-acetylglucosaminyltransferase radical fringe from Rattus norvegicus (Rat).